The primary structure comprises 1102 residues: Carbamoyl phosphate synthase large chain (1102 aa).

A carboxyphosphate synthetic domain region spans residues 1–402; that stretch reads MPKRTDLKSV…ALQKALRSLE (402 aa). 12 residues coordinate ATP: R129, R169, G175, G176, E208, I210, E215, G241, V242, H243, Q285, and E299. Residues 133–328 form the ATP-grasp 1 domain; the sequence is KGVVERCGAE…IAKIATKLSL (196 aa). Residues Q285, E299, and N301 each contribute to the Mg(2+) site. 3 residues coordinate Mn(2+): Q285, E299, and N301. An oligomerization domain region spans residues 403 to 546; it reads QKGSQLDFSS…YHYSSYDEED (144 aa). The carbamoyl phosphate synthetic domain stretch occupies residues 547 to 950; it reads EVGLHAKPSV…AFAKSQAAAN (404 aa). Positions 677 to 868 constitute an ATP-grasp 2 domain; it reads ARVLDEAGLT…MAKAAALIGT (192 aa). ATP is bound by residues R713, R752, L754, E759, G784, I785, H786, S787, Q827, and E839. 3 residues coordinate Mg(2+): Q827, E839, and N841. 3 residues coordinate Mn(2+): Q827, E839, and N841. The MGS-like domain maps to 951–1096; sequence NALPTEGKIF…QEHAANLSAA (146 aa). Positions 951–1102 are allosteric domain; it reads NALPTEGKIF…LSAAMEAANA (152 aa).

This sequence belongs to the CarB family. In terms of assembly, composed of two chains; the small (or glutamine) chain promotes the hydrolysis of glutamine to ammonia, which is used by the large (or ammonia) chain to synthesize carbamoyl phosphate. Tetramer of heterodimers (alpha,beta)4. The cofactor is Mg(2+). It depends on Mn(2+) as a cofactor.

It carries out the reaction hydrogencarbonate + L-glutamine + 2 ATP + H2O = carbamoyl phosphate + L-glutamate + 2 ADP + phosphate + 2 H(+). The enzyme catalyses hydrogencarbonate + NH4(+) + 2 ATP = carbamoyl phosphate + 2 ADP + phosphate + 2 H(+). It participates in amino-acid biosynthesis; L-arginine biosynthesis; carbamoyl phosphate from bicarbonate: step 1/1. It functions in the pathway pyrimidine metabolism; UMP biosynthesis via de novo pathway; (S)-dihydroorotate from bicarbonate: step 1/3. In terms of biological role, large subunit of the glutamine-dependent carbamoyl phosphate synthetase (CPSase). CPSase catalyzes the formation of carbamoyl phosphate from the ammonia moiety of glutamine, carbonate, and phosphate donated by ATP, constituting the first step of 2 biosynthetic pathways, one leading to arginine and/or urea and the other to pyrimidine nucleotides. The large subunit (synthetase) binds the substrates ammonia (free or transferred from glutamine from the small subunit), hydrogencarbonate and ATP and carries out an ATP-coupled ligase reaction, activating hydrogencarbonate by forming carboxy phosphate which reacts with ammonia to form carbamoyl phosphate. The chain is Carbamoyl phosphate synthase large chain from Paenarthrobacter aurescens (strain TC1).